The sequence spans 455 residues: Ribulose bisphosphate carboxylase large chain (455 aa).

Lysine 5 is subject to N6,N6,N6-trimethyllysine. Substrate is bound by residues asparagine 114 and threonine 164. The active-site Proton acceptor is lysine 166. Residue lysine 168 participates in substrate binding. Mg(2+) is bound by residues lysine 192, aspartate 194, and glutamate 195. Residue lysine 192 is modified to N6-carboxylysine. Histidine 285 serves as the catalytic Proton acceptor. Arginine 286, histidine 318, and serine 370 together coordinate substrate.

It belongs to the RuBisCO large chain family. Type I subfamily. Heterohexadecamer of 8 large chains and 8 small chains; disulfide-linked. The disulfide link is formed within the large subunit homodimers. The cofactor is Mg(2+). In terms of processing, the disulfide bond which can form in the large chain dimeric partners within the hexadecamer appears to be associated with oxidative stress and protein turnover.

It is found in the plastid. Its subcellular location is the chloroplast. It carries out the reaction 2 (2R)-3-phosphoglycerate + 2 H(+) = D-ribulose 1,5-bisphosphate + CO2 + H2O. It catalyses the reaction D-ribulose 1,5-bisphosphate + O2 = 2-phosphoglycolate + (2R)-3-phosphoglycerate + 2 H(+). Functionally, ruBisCO catalyzes two reactions: the carboxylation of D-ribulose 1,5-bisphosphate, the primary event in carbon dioxide fixation, as well as the oxidative fragmentation of the pentose substrate in the photorespiration process. Both reactions occur simultaneously and in competition at the same active site. The protein is Ribulose bisphosphate carboxylase large chain of Lupinus microcarpus var. densiflorus (Whitewhorl lupine).